The chain runs to 378 residues: Flagellar P-ring protein 2 (378 aa).

Residues 1–33 (MHEVSDKTNAIHPLQRVSRALFALGLLCFAAMA) form the signal peptide.

Belongs to the FlgI family. In terms of assembly, the basal body constitutes a major portion of the flagellar organelle and consists of four rings (L,P,S, and M) mounted on a central rod.

Its subcellular location is the periplasm. It is found in the bacterial flagellum basal body. Assembles around the rod to form the L-ring and probably protects the motor/basal body from shearing forces during rotation. The sequence is that of Flagellar P-ring protein 2 from Hahella chejuensis (strain KCTC 2396).